A 103-amino-acid polypeptide reads, in one-letter code: Large ribosomal subunit protein bL21 (103 aa).

This sequence belongs to the bacterial ribosomal protein bL21 family. As to quaternary structure, part of the 50S ribosomal subunit. Contacts protein L20.

In terms of biological role, this protein binds to 23S rRNA in the presence of protein L20. The protein is Large ribosomal subunit protein bL21 of Delftia acidovorans (strain DSM 14801 / SPH-1).